The chain runs to 343 residues: 4-hydroxy-2-oxovalerate aldolase (343 aa).

Residues 4 to 254 (PRLTDTTLRD…NPGLDVFSLM (251 aa)) form the Pyruvate carboxyltransferase domain. Residue 12–13 (RD) coordinates substrate. Asp13 contributes to the Mn(2+) binding site. Residue His16 is the Proton acceptor of the active site. Positions 166 and 193 each coordinate substrate. Mn(2+) is bound by residues His193 and His195. Position 284 (Tyr284) interacts with substrate.

The protein belongs to the 4-hydroxy-2-oxovalerate aldolase family.

It carries out the reaction (S)-4-hydroxy-2-oxopentanoate = acetaldehyde + pyruvate. This chain is 4-hydroxy-2-oxovalerate aldolase, found in Chloroflexus aurantiacus (strain ATCC 29364 / DSM 637 / Y-400-fl).